The chain runs to 77 residues: Phytosulfokines 5 (77 aa).

The signal sequence occupies residues 1 to 24 (MVKFTTFLCIIALLLCSTLTHASA). A propeptide spanning residues 25–68 (RLNPTSVYPEENSFKKLEQGEVICEGVGEEECFLIRRTLVAHTD) is cleaved from the precursor. Sulfotyrosine occurs at positions 69 and 71. A propeptide spanning residues 74-77 (NHNP) is cleaved from the precursor.

Belongs to the phytosulfokine family. Sulfation is important for activity and for the binding to a putative membrane receptor. In terms of processing, PSK-beta is an enzymatic derivative of PSK-alpha. In terms of tissue distribution, expressed in stems, roots, mature leaves and flowers. Most abundant in vascular bundles.

Its subcellular location is the secreted. In terms of biological role, promotes plant cell differentiation, organogenesis and somatic embryogenesis as well as cell proliferation. May be involved in the low quiescent center cell proliferation. This chain is Phytosulfokines 5 (PSK5), found in Arabidopsis thaliana (Mouse-ear cress).